A 570-amino-acid polypeptide reads, in one-letter code: Ferroportin (570 aa).

At 1–23 (MTKARDQTHQEGCCGSLANYLTS) the chain is on the cytoplasmic side. A helical transmembrane segment spans residues 24–53 (AKFLLYLGHSLSTWGDRMWHFAVSVFLVEL). Positions 39 and 43 each coordinate Fe cation. At 54–57 (YGNS) the chain is on the extracellular side. Residues 58–84 (LLLTAVYGLVVAGSVLVLGAIIGDWVD) form a helical membrane-spanning segment. The Cytoplasmic portion of the chain corresponds to 85–87 (KNA). A helical membrane pass occupies residues 88 to 118 (RLKVAQTSLVVQNVSVILCGIILMMVFLHKN). Over 119–126 (ELLTMYHG) the chain is Extracellular. Residues 127–162 (WVLTVCYILIITIANIANLASTATAITIQRDWIVVV) form a helical membrane-spanning segment. The Cytoplasmic portion of the chain corresponds to 163–164 (AG). A helical transmembrane segment spans residues 165 to 195 (ENRSRLADMNATIRRIDQLTNILAPMAVGQI). Topologically, residues 196-202 (MTFGSPV) are extracellular. A helical transmembrane segment spans residues 203 to 229 (IGCGFISGWNLVSMCVEYFLLWKVYQK). Topologically, residues 230-306 (TPALAVKAAL…DGWVSYYNQP (77 aa)) are cytoplasmic. A helical transmembrane segment spans residues 307 to 333 (VFLAGMGLAFLYMTVLGFDCITTGYAY). C326 is a Fe cation binding site. Residues 334-338 (TQGLS) are Extracellular-facing. Residues 339-366 (GSILSILMGASAITGIMGTVAFTWLRRK) traverse the membrane as a helical segment. The Cytoplasmic segment spans residues 367–368 (CG). A helical transmembrane segment spans residues 369–391 (LVRTGLFSGLAQLSCLILCVISV). At 392-452 (FMPGSPLDLS…EMSTKPIPIV (61 aa)) the chain is on the extracellular side. N437 carries N-linked (GlcNAc...) asparagine glycosylation. The chain crosses the membrane as a helical span at residues 453-482 (SVSLLFAGVIAARIGLWSFDLTVTQLLQEN). At 483-487 (VIESE) the chain is on the cytoplasmic side. A helical transmembrane segment spans residues 488-512 (RGIINGVQNSMNYLLDLLHFIMVIL). A Fe cation-binding site is contributed by H506. Residues 513–515 (APN) lie on the Extracellular side of the membrane. Residues 516 to 541 (PEAFGLLVLISVSFVAMGHLMYFRFA) traverse the membrane as a helical segment. Topologically, residues 542 to 570 (QKTLGNQIFVCGPDEKEVTDENQPNTSVV) are cytoplasmic.

Belongs to the ferroportin (FP) (TC 2.A.100) family. SLC40A subfamily. As to quaternary structure, identified in a complex with STOM. Interacts with HAMP; affinity of the peptide hormone HAMP for SLC40A1 increases by 80-fold in the presence of iron and the interaction promotes SLC40A1 ubiquitination and degradation. Part of a complex composed of SLC40A1/ferroportin, TF/transferrin and HEPH/hephaestin that transfers iron from cells to transferrin. In terms of processing, polyubiquitinated by RNF217; leading to proteasomal degradation. Under conditions of high systemic iron levels, both the hormone peptide hepcidin/HAMP and holo(iron bound)-transferrin/TF induce the ubiquitination, internalization and proteasomal degradation of SLC40A1 to control iron release from cells. In terms of tissue distribution, high expression in spleen, liver, kidney, heart and duodenum.

It localises to the cell membrane. The protein resides in the basolateral cell membrane. It carries out the reaction Fe(2+)(in) = Fe(2+)(out). Functionally, transports Fe(2+) from the inside of a cell to the outside of the cell, playing a key role for maintaining systemic iron homeostasis. Transports iron from intestinal, splenic, hepatic cells, macrophages and erythrocytes into the blood to provide iron to other tissues. Controls therefore dietary iron uptake, iron recycling by macrophages and erythrocytes, and release of iron stores in hepatocytes. When iron is in excess in serum, circulating HAMP/hepcidin levels increase resulting in a degradation of SLC40A1, thus limiting the iron efflux to plasma. The protein is Ferroportin of Mus musculus (Mouse).